We begin with the raw amino-acid sequence, 1276 residues long: Sterol regulatory element-binding protein cleavage-activating protein (1276 aa).

Over 1–18 (MTLTERLREKISQAFYNH) the chain is Cytoplasmic. A helical membrane pass occupies residues 19–39 (GLLCASYPIPIILFTGLCILA). Residues 40-279 (CCYPLLKLPL…NLVHVHFKEE (240 aa)) are Lumenal-facing. The tract at residues 46 to 284 (KLPLPGTGPV…HFKEEIGIAE (239 aa)) is loop-1. The segment at 60 to 81 (PVKDYSPPPVDSDHKQGEPSEQ) is disordered. Residue Asn263 is glycosylated (N-linked (GlcNAc...) asparagine). A helical membrane pass occupies residues 280 to 300 (IGIAELIPLVTTYIILFAYIY). One can recognise an SSD domain in the interval 284–442 (ELIPLVTTYI…MFFFTTVLSI (159 aa)). At 301–312 (FSTRKIDMVKSK) the chain is on the cytoplasmic side. Residues 313–333 (WGLALAAVVTVLSSLLMSVGL) traverse the membrane as a helical segment. Over 334-344 (CTLFGLTPTLN) the chain is Lumenal. The helical transmembrane segment at 345–365 (GGEIFPYLVVVIGLENVLVLT) threads the bilayer. Over 366–401 (KSVVSTPVDLEVKLRIAQGLSSESWSIMKNVATELG) the chain is Cytoplasmic. The helical transmembrane segment at 402–422 (IILIGYFTLVPAIQEFCLFAV) threads the bilayer. Position 423 (Val423) is a topological domain, lumenal. The chain crosses the membrane as a helical span at residues 424–444 (GLVSDFFLQMFFFTTVLSIDI). At 445–518 (RRMELADLNK…FLARTRLAQR (74 aa)) the chain is on the cytoplasmic side. An ER export signal motif is present at residues 447–452 (MELADL). Residues Lys454 and Lys466 each participate in a glycyl lysine isopeptide (Lys-Gly) (interchain with G-Cter in ubiquitin) cross-link. A helical membrane pass occupies residues 519–539 (LIMAGTVVWIGILVYTDPAGL). The tract at residues 535 to 710 (DPAGLRTYLA…QAHGDITLYK (176 aa)) is loop-7. At 540-708 (RTYLAAQVTE…GTQAHGDITL (169 aa)) the chain is on the lumenal side. Residues Asn590 and Asn641 are each glycosylated (N-linked (GlcNAc...) asparagine). Residues 709 to 729 (YKVAALGLAAGIVLVLLLLCL) form a helical membrane-spanning segment. The Cytoplasmic portion of the chain corresponds to 730–1276 (YRVLCPRNYG…YVPSVLEKLD (547 aa)). Residues 731-1276 (RVLCPRNYGQ…YVPSVLEKLD (546 aa)) are interaction with SREBF2. The stretch at 771–811 (VLRGHLMDIECLASDGMLLVSCCLAGQVCVWDAQTGDCLTR) is one WD 1 repeat. The tract at residues 816–903 (GSRRDSCGGG…RHRAGCGRAR (88 aa)) is disordered. A phosphoserine mark is found at Ser821, Ser837, Ser843, Ser850, Ser905, and Ser934. A disordered region spans residues 928–957 (PALRPPSPGSPLPQASQEDGAAPEKGSPPL). 2 WD repeats span residues 949–999 (APEK…LCCS) and 1002–1039 (EVSSGITALVFLDRRIVAARLNGSLDFFSLETHTSLSP). The residue at position 1048 (Arg1048) is an Omega-N-methylarginine. 4 WD repeats span residues 1074-1111 (AHQKPITALRAAAGRLVTGSQDHTLRVFRLEDSCCLFT), 1114-1152 (GHSGAITTVYIDQTMVLASGGQDGAICLWDVLTGSRVSH), 1155-1192 (AHRGDVTSLTCTTSCVISSGLDDLINIWDRSTGIKLYS), and 1194-1232 (QQDLGCGASLGVISDNLLVTGGQGCVSFWDLNYGDLLQT).

This sequence belongs to the WD repeat SCAP family. In terms of assembly, membrane region forms a homotetramer. Component of the SCAP-SREBP complex (composed of SCAP and SREBF1/SREBP1 or SREBF2/SREBP2); interacts with SREBF1/SREBP1 or SREBF2/SREBP2 through its C-terminal cytoplasmic domain. Forms a ternary complex with INSIG1 or INSIG2 through its transmembrane domains at high sterol concentrations. Interacts with PAQR3; the interaction anchors the SCAP-SREBP complex to the Golgi apparatus in low cholesterol conditions. Interacts with the SEC23-SEC24 complex in a SAR1-GTP-dependent manner through an ER export signal in its third cytoplasmic loop. Interacts with RNF139; the interaction inhibits the interaction of SCAP with SEC24B and hampering the ER to Golgi transport of the SCAP-SREBP complex. Interacts with SPRING. In terms of processing, ubiquitinated at Lys-454 and Lys-466. RNF145 triggers ubiquitination of SCAP, likely inhibiting SCAP-SREBP complex transport to the Golgi apparatus and the subsequent processing/maturation of SREBF2/SREBP2.

The protein resides in the endoplasmic reticulum membrane. The protein localises to the golgi apparatus membrane. Its subcellular location is the cytoplasmic vesicle. It is found in the COPII-coated vesicle membrane. Functionally, escort protein required for cholesterol as well as lipid homeostasis. Regulates export of the SCAP-SREBP complex from the endoplasmic reticulum to the Golgi upon low cholesterol, thereby regulating the processing of sterol regulatory element-binding proteins (SREBPs) SREBF1/SREBP1 and SREBF2/SREBP2. At high sterol concentrations, formation of a ternary complex with INSIG (INSIG1 or INSIG2) leads to mask the ER export signal in SCAP, promoting retention of the complex in the endoplasmic reticulum. Low sterol concentrations trigger release of INSIG, a conformational change in the SSD domain of SCAP, unmasking of the ER export signal, promoting recruitment into COPII-coated vesicles and transport of the SCAP-SREBP to the Golgi: in the Golgi, SREBPs are then processed, releasing the transcription factor fragment of SREBPs from the membrane, its import into the nucleus and up-regulation of LDLR, INSIG1 and the mevalonate pathway. Binds cholesterol via its SSD domain. This chain is Sterol regulatory element-binding protein cleavage-activating protein, found in Cricetulus griseus (Chinese hamster).